The sequence spans 323 residues: Acetyl-coenzyme A carboxylase carboxyl transferase subunit alpha (323 aa).

The CoA carboxyltransferase C-terminal domain maps to 39–293 (RLAGKSQQLT…KRSLAESLRQ (255 aa)).

The protein belongs to the AccA family. In terms of assembly, acetyl-CoA carboxylase is a heterohexamer composed of biotin carboxyl carrier protein (AccB), biotin carboxylase (AccC) and two subunits each of ACCase subunit alpha (AccA) and ACCase subunit beta (AccD).

The protein resides in the cytoplasm. The enzyme catalyses N(6)-carboxybiotinyl-L-lysyl-[protein] + acetyl-CoA = N(6)-biotinyl-L-lysyl-[protein] + malonyl-CoA. The protein operates within lipid metabolism; malonyl-CoA biosynthesis; malonyl-CoA from acetyl-CoA: step 1/1. In terms of biological role, component of the acetyl coenzyme A carboxylase (ACC) complex. First, biotin carboxylase catalyzes the carboxylation of biotin on its carrier protein (BCCP) and then the CO(2) group is transferred by the carboxyltransferase to acetyl-CoA to form malonyl-CoA. The sequence is that of Acetyl-coenzyme A carboxylase carboxyl transferase subunit alpha from Cupriavidus metallidurans (strain ATCC 43123 / DSM 2839 / NBRC 102507 / CH34) (Ralstonia metallidurans).